Consider the following 334-residue polypeptide: Oligopeptide transport ATP-binding protein OppF (334 aa).

Residues 12-265 form the ABC transporter domain; the sequence is LEIADLKVHF…PLHPYTRALM (254 aa). 57-64 is an ATP binding site; sequence GESGCGKS.

It belongs to the ABC transporter superfamily. In terms of assembly, the complex is composed of two ATP-binding proteins (OppD and OppF), two transmembrane proteins (OppB and OppC) and a solute-binding protein (OppA or MppA).

The protein resides in the cell inner membrane. The catalysed reaction is a [peptide](out) + ATP + H2O = a [peptide](in) + ADP + phosphate + H(+). It carries out the reaction L-alanyl-gamma-D-glutamyl-meso-2,6-diaminopimelate(out) + ATP + H2O = L-alanyl-gamma-D-glutamyl-meso-2,6-diaminopimelate(in) + ADP + phosphate + H(+). Functionally, part of the ABC transporter complex OppABCDF involved in the uptake of oligopeptides and of the ABC transporter complex MppA-OppBCDF involved in the uptake of the cell wall murein tripeptide L-alanyl-gamma-D-glutamyl-meso-diaminopimelate. Probably responsible for energy coupling to the transport system. Plays an important nutritional role and is involved in the recycling of cell wall peptides. The polypeptide is Oligopeptide transport ATP-binding protein OppF (oppF) (Escherichia coli (strain K12)).